The sequence spans 121 residues: Large ribosomal subunit protein uL18 (121 aa).

It belongs to the universal ribosomal protein uL18 family. Part of the 50S ribosomal subunit; part of the 5S rRNA/L5/L18/L25 subcomplex. Contacts the 5S and 23S rRNAs.

This is one of the proteins that bind and probably mediate the attachment of the 5S RNA into the large ribosomal subunit, where it forms part of the central protuberance. This chain is Large ribosomal subunit protein uL18, found in Burkholderia ambifaria (strain MC40-6).